Here is a 289-residue protein sequence, read N- to C-terminus: uncharacterized protein (289 aa).

A compositionally biased stretch (basic and acidic residues) spans 1-20 (MNPMDRQTEGQEPQHQDRQP). The disordered stretch occupies residues 1-39 (MNPMDRQTEGQEPQHQDRQPGIESKMNPLPLSEDEDYRG). An NADP(+)-binding site is contributed by 49-73 (IITGGDSGIGRAAAIAFAKEGADIS). Serine 181 serves as a coordination point for substrate. Tyrosine 194 acts as the Proton acceptor in catalysis.

Belongs to the short-chain dehydrogenases/reductases (SDR) family.

This is an uncharacterized protein from Bacillus subtilis (strain 168).